Consider the following 236-residue polypeptide: DNA repair protein RecO (236 aa).

Belongs to the RecO family.

Its function is as follows. Involved in DNA repair and RecF pathway recombination. The protein is DNA repair protein RecO of Haemophilus influenzae (strain PittGG).